The chain runs to 309 residues: Protein FdhE (309 aa).

It belongs to the FdhE family.

It localises to the cytoplasm. In terms of biological role, necessary for formate dehydrogenase activity. This Salmonella arizonae (strain ATCC BAA-731 / CDC346-86 / RSK2980) protein is Protein FdhE.